Here is a 431-residue protein sequence, read N- to C-terminus: Nuclear bridge Ish domain protein les1 (431 aa).

An N-terminal signal peptide occupies residues 1 to 21 (MQPRFLLHGALLALGIQLCLS).

The protein localises to the nucleus inner membrane. Inner nuclear envelope protein involved in nuclear fission, which is achieved via local disassembly of nuclear pores within the narrow bridge that links segregating daughter nuclei. Les1 restricts the process of local nuclear envelope breakdown to the bridge midzone to prevent the leakage of material from daughter nuclei during mitosis. The sequence is that of Nuclear bridge Ish domain protein les1 from Schizosaccharomyces pombe (strain 972 / ATCC 24843) (Fission yeast).